We begin with the raw amino-acid sequence, 192 residues long: uncharacterized protein (192 aa).

The 132-residue stretch at 29–160 folds into the Nudix hydrolase domain; that stretch reads QRQAAVLIPV…PLDVYRRGNS (132 aa). A Nudix box motif is present at residues 67–89; that stretch reads GAVDSTDASLIAAALREAQEEVA. Residues Glu83 and Glu87 each coordinate Mg(2+).

It belongs to the Nudix hydrolase family. PCD1 subfamily. Mn(2+) is required as a cofactor. The cofactor is Mg(2+).

Its function is as follows. Probably mediates the hydrolysis of some nucleoside diphosphate derivatives. This is an uncharacterized protein from Salmonella agona (strain SL483).